A 284-amino-acid chain; its full sequence is Nucleotide-binding protein Pput_0988 (284 aa).

Gly8–Ser15 contributes to the ATP binding site. Position 60–63 (Asp60–Asn63) interacts with GTP.

This sequence belongs to the RapZ-like family.

In terms of biological role, displays ATPase and GTPase activities. In Pseudomonas putida (strain ATCC 700007 / DSM 6899 / JCM 31910 / BCRC 17059 / LMG 24140 / F1), this protein is Nucleotide-binding protein Pput_0988.